The following is a 141-amino-acid chain: Hemoglobin subunit alpha-D (141 aa).

In terms of domain architecture, Globin spans 1 to 141 (MLTADDKKLL…VAAVLAEKYR (141 aa)). 2 residues coordinate heme b: H58 and H87.

It belongs to the globin family. In terms of assembly, heterotetramer of two alpha-D chains and two beta chains. In terms of tissue distribution, red blood cells.

Functionally, involved in oxygen transport from the lung to the various peripheral tissues. The protein is Hemoglobin subunit alpha-D (HBAD) of Anser anser anser (Western greylag goose).